Here is a 445-residue protein sequence, read N- to C-terminus: GTPase Der (445 aa).

EngA-type G domains follow at residues 3 to 167 (PVIA…YAGQ) and 180 to 353 (IKIA…AAAM). Residues 9-16 (GRPNVGKS), 56-60 (DTGGF), 119-122 (NKAE), 186-193 (GRPNVGKS), 233-237 (DTAGL), and 298-301 (NKWD) contribute to the GTP site. Residues 354–438 (AKLPTPKLTR…PLRIEFRSSN (85 aa)) enclose the KH-like domain.

Belongs to the TRAFAC class TrmE-Era-EngA-EngB-Septin-like GTPase superfamily. EngA (Der) GTPase family. In terms of assembly, associates with the 50S ribosomal subunit.

Its function is as follows. GTPase that plays an essential role in the late steps of ribosome biogenesis. The chain is GTPase Der from Burkholderia lata (strain ATCC 17760 / DSM 23089 / LMG 22485 / NCIMB 9086 / R18194 / 383).